A 297-amino-acid polypeptide reads, in one-letter code: Homoserine kinase (297 aa).

An ATP-binding site is contributed by 82 to 92; sequence PLTRGLGSSAS.

The protein belongs to the GHMP kinase family. Homoserine kinase subfamily.

Its subcellular location is the cytoplasm. It carries out the reaction L-homoserine + ATP = O-phospho-L-homoserine + ADP + H(+). It functions in the pathway amino-acid biosynthesis; L-threonine biosynthesis; L-threonine from L-aspartate: step 4/5. In terms of biological role, catalyzes the ATP-dependent phosphorylation of L-homoserine to L-homoserine phosphate. The protein is Homoserine kinase of Bacillus cereus (strain AH187).